The chain runs to 447 residues: Tubulin beta-5 chain (447 aa).

Positions 11, 69, 138, 142, 143, 144, 204, and 226 each coordinate GTP. Glu-69 contributes to the Mg(2+) binding site. Residues 424–447 (QYQDATAEEEGEFDEDEELDDAMG) are disordered. The segment covering 429 to 447 (TAEEEGEFDEDEELDDAMG) has biased composition (acidic residues).

This sequence belongs to the tubulin family. In terms of assembly, dimer of alpha and beta chains. A typical microtubule is a hollow water-filled tube with an outer diameter of 25 nm and an inner diameter of 15 nM. Alpha-beta heterodimers associate head-to-tail to form protofilaments running lengthwise along the microtubule wall with the beta-tubulin subunit facing the microtubule plus end conferring a structural polarity. Microtubules usually have 13 protofilaments but different protofilament numbers can be found in some organisms and specialized cells. Mg(2+) serves as cofactor.

It localises to the cytoplasm. The protein localises to the cytoskeleton. Tubulin is the major constituent of microtubules, a cylinder consisting of laterally associated linear protofilaments composed of alpha- and beta-tubulin heterodimers. Microtubules grow by the addition of GTP-tubulin dimers to the microtubule end, where a stabilizing cap forms. Below the cap, tubulin dimers are in GDP-bound state, owing to GTPase activity of alpha-tubulin. This is Tubulin beta-5 chain (TUBB5) from Ectocarpus variabilis (Brown alga).